Reading from the N-terminus, the 378-residue chain is Erythronate-4-phosphate dehydrogenase (378 aa).

Positions 45 and 66 each coordinate substrate. NAD(+)-binding residues include Asp142 and Thr169. Arg202 is a catalytic residue. An NAD(+)-binding site is contributed by Asp226. The active site involves Glu231. His248 (proton donor) is an active-site residue. Gly251 serves as a coordination point for NAD(+). Tyr252 is a binding site for substrate.

The protein belongs to the D-isomer specific 2-hydroxyacid dehydrogenase family. PdxB subfamily. As to quaternary structure, homodimer.

It is found in the cytoplasm. The enzyme catalyses 4-phospho-D-erythronate + NAD(+) = (R)-3-hydroxy-2-oxo-4-phosphooxybutanoate + NADH + H(+). It participates in cofactor biosynthesis; pyridoxine 5'-phosphate biosynthesis; pyridoxine 5'-phosphate from D-erythrose 4-phosphate: step 2/5. Catalyzes the oxidation of erythronate-4-phosphate to 3-hydroxy-2-oxo-4-phosphonooxybutanoate. The protein is Erythronate-4-phosphate dehydrogenase of Cellvibrio japonicus (strain Ueda107) (Pseudomonas fluorescens subsp. cellulosa).